Reading from the N-terminus, the 313-residue chain is Olfactory receptor 4Q3 (313 aa).

Topologically, residues 1 to 25 (MKKEQDSNVTEFVLLGLSSSWELQL) are extracellular. Residue Asn-8 is glycosylated (N-linked (GlcNAc...) asparagine). Residues 26 to 49 (FLFLLFLFFYIAIVLGNLLIVVTV) form a helical membrane-spanning segment. Over 50-58 (QAHAHLLQS) the chain is Cytoplasmic. Residues 59–80 (PMYYFLGHLSFIDLCLSCVTVP) form a helical membrane-spanning segment. Topologically, residues 81-101 (KMLGDFLQQGKSISFSGCLAQ) are extracellular. Residues Cys-98 and Cys-190 are joined by a disulfide bond. The helical transmembrane segment at 102-121 (IYFLHFLGASEMFLLTVMAY) threads the bilayer. Topologically, residues 122-140 (DRYVAICNPLRYLTVMNPQ) are cytoplasmic. Residues 141 to 159 (LCLWLVLACWCGGFIHSIM) form a helical membrane-spanning segment. At 160–196 (QVILVIQLPFCGPNELDNFYCDVPQVIKLACMDTYVV) the chain is on the extracellular side. The chain crosses the membrane as a helical span at residues 197–220 (EVLVIANSGLLSLVCFLVLLFSYA). At 221–236 (IILITLRTHFCQGQNK) the chain is on the cytoplasmic side. A helical transmembrane segment spans residues 237–259 (VFSTCASHLTVVSLIFVPCVFIY). Over 260–270 (LRPFCSFSVDK) the chain is Extracellular. A helical transmembrane segment spans residues 271 to 290 (IFSLFYTVITPMLNPLIYTL). Over 291 to 313 (RNTDMKTAMKKLRIKPCGIPLPC) the chain is Cytoplasmic.

This sequence belongs to the G-protein coupled receptor 1 family.

Its subcellular location is the cell membrane. Odorant receptor. The protein is Olfactory receptor 4Q3 (OR4Q3) of Homo sapiens (Human).